Here is a 423-residue protein sequence, read N- to C-terminus: Adenylosuccinate synthetase (423 aa).

GTP-binding positions include 12–18 (GDEGKGK) and 40–42 (GHT). The active-site Proton acceptor is the Asp-13. Positions 13 and 40 each coordinate Mg(2+). IMP is bound by residues 13-16 (DEGK), 38-41 (NAGH), Thr-129, Arg-143, Gln-224, Thr-239, and Arg-303. His-41 serves as the catalytic Proton donor. A substrate-binding site is contributed by 299–305 (ATTGRKR). GTP is bound by residues Arg-305, 331-333 (KGD), and 412-414 (SVG).

It belongs to the adenylosuccinate synthetase family. Homodimer. Requires Mg(2+) as cofactor.

The protein localises to the cytoplasm. The catalysed reaction is IMP + L-aspartate + GTP = N(6)-(1,2-dicarboxyethyl)-AMP + GDP + phosphate + 2 H(+). It functions in the pathway purine metabolism; AMP biosynthesis via de novo pathway; AMP from IMP: step 1/2. Plays an important role in the de novo pathway of purine nucleotide biosynthesis. Catalyzes the first committed step in the biosynthesis of AMP from IMP. The chain is Adenylosuccinate synthetase from Christiangramia forsetii (strain DSM 17595 / CGMCC 1.15422 / KT0803) (Gramella forsetii).